Consider the following 314-residue polypeptide: Ribosomal RNA small subunit methyltransferase H (314 aa).

S-adenosyl-L-methionine is bound by residues 34–36, D53, F82, D103, and Q110; that span reads GGH.

It belongs to the methyltransferase superfamily. RsmH family.

It is found in the cytoplasm. The enzyme catalyses cytidine(1402) in 16S rRNA + S-adenosyl-L-methionine = N(4)-methylcytidine(1402) in 16S rRNA + S-adenosyl-L-homocysteine + H(+). Specifically methylates the N4 position of cytidine in position 1402 (C1402) of 16S rRNA. The protein is Ribosomal RNA small subunit methyltransferase H of Limosilactobacillus fermentum (strain NBRC 3956 / LMG 18251) (Lactobacillus fermentum).